Reading from the N-terminus, the 322-residue chain is Cysteine protease YopT (322 aa).

A disordered region spans residues 43-72 (SHSNRQKKLSATIKHNQSSRSMLDRKLTSD). Active-site residues include C139, H258, and D274.

The protein belongs to the peptidase C58 family. As to quaternary structure, interacts with human ARHA.

The protein resides in the secreted. Functionally, cysteine protease, which is translocated into infected cells and plays a central role in pathogenesis by cleaving the C-terminus end of the human small GTPase RhoA/ARHA, a regulator of cytoskeleton. Once cleaved, ARHA loses its lipid modification, and is released from the cell membrane, leading to the subsequent disruption of actin cytoskeleton of the host cell. The protein is Cysteine protease YopT (yopT) of Yersinia enterocolitica.